We begin with the raw amino-acid sequence, 65 residues long: Large ribosomal subunit protein bL35 (65 aa).

The protein belongs to the bacterial ribosomal protein bL35 family.

The chain is Large ribosomal subunit protein bL35 from Nitrosomonas eutropha (strain DSM 101675 / C91 / Nm57).